The chain runs to 227 residues: Cytochrome c oxidase subunit 2 (227 aa).

Topologically, residues Met1 to Ser14 are mitochondrial intermembrane. A helical membrane pass occupies residues Pro15–Thr45. Residues Leu46 to Gln59 are Mitochondrial matrix-facing. Residues Glu60–Thr87 form a helical membrane-spanning segment. The Mitochondrial intermembrane portion of the chain corresponds to Asp88 to Leu227. Cu cation contacts are provided by His161, Cys196, Glu198, Cys200, His204, and Met207. Glu198 contributes to the Mg(2+) binding site.

The protein belongs to the cytochrome c oxidase subunit 2 family. Component of the cytochrome c oxidase (complex IV, CIV), a multisubunit enzyme composed of 14 subunits. The complex is composed of a catalytic core of 3 subunits MT-CO1, MT-CO2 and MT-CO3, encoded in the mitochondrial DNA, and 11 supernumerary subunits COX4I, COX5A, COX5B, COX6A, COX6B, COX6C, COX7A, COX7B, COX7C, COX8 and NDUFA4, which are encoded in the nuclear genome. The complex exists as a monomer or a dimer and forms supercomplexes (SCs) in the inner mitochondrial membrane with NADH-ubiquinone oxidoreductase (complex I, CI) and ubiquinol-cytochrome c oxidoreductase (cytochrome b-c1 complex, complex III, CIII), resulting in different assemblies (supercomplex SCI(1)III(2)IV(1) and megacomplex MCI(2)III(2)IV(2)). Found in a complex with TMEM177, COA6, COX18, COX20, SCO1 and SCO2. Interacts with TMEM177 in a COX20-dependent manner. Interacts with COX20. Interacts with COX16. The cofactor is Cu cation.

It is found in the mitochondrion inner membrane. It carries out the reaction 4 Fe(II)-[cytochrome c] + O2 + 8 H(+)(in) = 4 Fe(III)-[cytochrome c] + 2 H2O + 4 H(+)(out). Functionally, component of the cytochrome c oxidase, the last enzyme in the mitochondrial electron transport chain which drives oxidative phosphorylation. The respiratory chain contains 3 multisubunit complexes succinate dehydrogenase (complex II, CII), ubiquinol-cytochrome c oxidoreductase (cytochrome b-c1 complex, complex III, CIII) and cytochrome c oxidase (complex IV, CIV), that cooperate to transfer electrons derived from NADH and succinate to molecular oxygen, creating an electrochemical gradient over the inner membrane that drives transmembrane transport and the ATP synthase. Cytochrome c oxidase is the component of the respiratory chain that catalyzes the reduction of oxygen to water. Electrons originating from reduced cytochrome c in the intermembrane space (IMS) are transferred via the dinuclear copper A center (CU(A)) of subunit 2 and heme A of subunit 1 to the active site in subunit 1, a binuclear center (BNC) formed by heme A3 and copper B (CU(B)). The BNC reduces molecular oxygen to 2 water molecules using 4 electrons from cytochrome c in the IMS and 4 protons from the mitochondrial matrix. The polypeptide is Cytochrome c oxidase subunit 2 (MT-CO2) (Mandrillus leucophaeus (Drill)).